We begin with the raw amino-acid sequence, 300 residues long: Tyrosine recombinase XerC (300 aa).

Residues 4–90 (VALSLDVSRF…ALRSFFDWLV (87 aa)) enclose the Core-binding (CB) domain. Residues 111–290 (HLPKNIDVDD…DFQHLASVYD (180 aa)) form the Tyr recombinase domain. Residues Arg-150, Lys-174, His-242, Arg-245, and His-268 contribute to the active site. Residue Tyr-277 is the O-(3'-phospho-DNA)-tyrosine intermediate of the active site.

The protein belongs to the 'phage' integrase family. XerC subfamily. As to quaternary structure, forms a cyclic heterotetrameric complex composed of two molecules of XerC and two molecules of XerD, in which XerC interacts with XerD via its C-terminal region, XerD interacts with XerC via its C-terminal region and so on.

It localises to the cytoplasm. FtsK may regulate the catalytic switch between XerC and XerD in the heterotetrameric complex during the two steps of the recombination process. Functionally, site-specific tyrosine recombinase, which acts by catalyzing the cutting and rejoining of the recombining DNA molecules. Binds cooperatively to specific DNA consensus sequences that are separated from XerD binding sites by a short central region, forming the heterotetrameric XerC-XerD complex that recombines DNA substrates. The complex is essential to convert dimers of the bacterial chromosome into monomers to permit their segregation at cell division. It also contributes to the segregational stability of plasmids. In the complex XerC specifically exchanges the top DNA strands. This chain is Tyrosine recombinase XerC, found in Salmonella typhi.